Consider the following 116-residue polypeptide: MQTITILALIACVAVPIFADFDHLRARRDVVESSGEGSGESSGEKPVVESSGEGSGESSGDKEAVEASGEGSGEGSGDATLESSGEGSGESHNAVVASDSPKDVKALTANEFAVSV.

Residues 1 to 19 (MQTITILALIACVAVPIFA) form the signal peptide. The tract at residues 29–102 (DVVESSGEGS…NAVVASDSPK (74 aa)) is disordered. Low complexity-rich tracts occupy residues 32–41 (ESSGEGSGES) and 48–58 (VESSGEGSGES). 5 O-linked (Xyl...) (chondroitin sulfate) serine glycosylation sites follow: S68, S72, S76, S84, and S88.

This chain is Chondroitin proteoglycan 7, found in Caenorhabditis elegans.